A 523-amino-acid chain; its full sequence is MAAVAVAVREDSGSGMKAELPPGPGAVGREMTKEEKLQLRKEKKQQKKKRKEEKGAEPETGSAVSAAQCQVGPTRELPESGIQLGTPREKVPAGRSKAELRAERRAKQEAERALKQARKGEQGGPPPKASPSTAGETPSGVKRLPEYPQVDDLLLRRLVKKPERQQVPTRKDYGSKVSLFSHLPQYSRQNSLTQFMSIPSSVIHPAMVRLGLQYSQGLVSGSNARCIALLRALQQVIQDYTTPPNEELSRDLVNKLKPYMSFLTQCRPLSASMHNAIKFLNKEITSVGSSKREEEAKSELRAAIDRYVQEKIVLAAQAISRFAYQKISNGDVILVYGCSSLVSRILQEAWTEGRRFRVVVVDSRPWLEGRHTLRSLVHAGVPASYLLIPAASYVLPEVSKVLLGAHALLANGSVMSRVGTAQLALVARAHNVPVLVCCETYKFCERVQTDAFVSNELDDPDDLQCKRGEHVALANWQNHASLRLLNLVYDVTPPELVDLVITELGMIPCSSVPVVLRVKSSDQ.

The tract at residues 1 to 147 is disordered; sequence MAAVAVAVRE…PSGVKRLPEY (147 aa). Position 2 is an N-acetylalanine (A2). Phosphoserine is present on S12. A compositionally biased stretch (basic and acidic residues) spans 30 to 40; sequence EMTKEEKLQLR. Residues 41-51 show a composition bias toward basic residues; the sequence is KEKKQQKKKRK. A Phosphothreonine modification is found at T86. Over residues 87–121 the composition is skewed to basic and acidic residues; that stretch reads PREKVPAGRSKAELRAERRAKQEAERALKQARKGE. At S130 the chain carries Phosphoserine. The tract at residues 170–179 is may bind the chemical integrated stress response (ISR) inhibitor ISRIB; that stretch reads RKDYGSKVSL.

Belongs to the eIF-2B alpha/beta/delta subunits family. Component of the translation initiation factor 2B (eIF2B) complex which is a heterodecamer of two sets of five different subunits: alpha, beta, gamma, delta and epsilon. Subunits alpha, beta and delta comprise a regulatory subcomplex and subunits epsilon and gamma comprise a catalytic subcomplex. Within the complex, the hexameric regulatory complex resides at the center, with the two heterodimeric catalytic subcomplexes bound on opposite sides.

Its subcellular location is the cytoplasm. It is found in the cytosol. Its activity is regulated as follows. Activated by the chemical integrated stress response (ISR) inhibitor ISRIB which stimulates guanine nucleotide exchange factor activity for both phosphorylated and unphosphorylated eIF2. Functionally, acts as a component of the translation initiation factor 2B (eIF2B) complex, which catalyzes the exchange of GDP for GTP on eukaryotic initiation factor 2 (eIF2) gamma subunit. Its guanine nucleotide exchange factor activity is repressed when bound to eIF2 complex phosphorylated on the alpha subunit, thereby limiting the amount of methionyl-initiator methionine tRNA available to the ribosome and consequently global translation is repressed. In Homo sapiens (Human), this protein is Translation initiation factor eIF2B subunit delta (EIF2B4).